Consider the following 293-residue polypeptide: GTPase Era (293 aa).

One can recognise an Era-type G domain in the interval 5-174; it reads RTISVCIIGR…ITGKAQIAPW (170 aa). The tract at residues 13 to 20 is G1; that stretch reads GRPNSGKS. 13-20 lines the GTP pocket; sequence GRPNSGKS. The G2 stretch occupies residues 39 to 43; it reads QTTRS. Residues 60-63 form a G3 region; that stretch reads DTPG. GTP-binding positions include 60-64 and 122-125; these read DTPGI and NKID. Residues 122–125 are G4; sequence NKID. The interval 150-152 is G5; that stretch reads ISA. Positions 202–279 constitute a KH type-2 domain; it reads LQQELPYKLT…HLFLFVKVHE (78 aa).

It belongs to the TRAFAC class TrmE-Era-EngA-EngB-Septin-like GTPase superfamily. Era GTPase family. In terms of assembly, monomer.

It localises to the cytoplasm. The protein localises to the cell inner membrane. Functionally, an essential GTPase that binds both GDP and GTP, with rapid nucleotide exchange. Plays a role in 16S rRNA processing and 30S ribosomal subunit biogenesis and possibly also in cell cycle regulation and energy metabolism. The chain is GTPase Era from Rickettsia akari (strain Hartford).